The sequence spans 346 residues: Very-long-chain 3-oxoacyl-CoA reductase (346 aa).

A helical transmembrane segment spans residues 23–43 (AAWIVFGLGISKMVFLTLNFS). Val-69, Asp-123, Asn-150, Tyr-222, Lys-226, Val-255, and Ser-257 together coordinate NADP(+). Tyr-222 acts as the Proton donor in catalysis. Catalysis depends on Lys-226, which acts as the Lowers pKa of active site Tyr.

This sequence belongs to the short-chain dehydrogenases/reductases (SDR) family.

The protein resides in the endoplasmic reticulum membrane. It carries out the reaction a very-long-chain (3R)-3-hydroxyacyl-CoA + NADP(+) = a very-long-chain 3-oxoacyl-CoA + NADPH + H(+). It participates in lipid metabolism; fatty acid biosynthesis. In terms of biological role, component of the microsomal membrane bound fatty acid elongation system, which produces the 26-carbon very long-chain fatty acids (VLCFA) from palmitate. Catalyzes the reduction of the 3-ketoacyl-CoA intermediate that is formed in each cycle of fatty acid elongation. VLCFAs serve as precursors for ceramide and sphingolipids. The sequence is that of Very-long-chain 3-oxoacyl-CoA reductase from Kluyveromyces lactis (strain ATCC 8585 / CBS 2359 / DSM 70799 / NBRC 1267 / NRRL Y-1140 / WM37) (Yeast).